Here is a 310-residue protein sequence, read N- to C-terminus: Putrescinyltransferase (310 aa).

The protein belongs to the thymidine aminotransferase family.

It catalyses the reaction 5-phosphomethyl-dUMP in DNA + putrescine = 5-N(alpha)-putrescinyl-dTMP in DNA + phosphate. Its function is as follows. Transfers putrescine to 5-phosphomethyl-2'-deoxyuridine (5-PmdU) to produce 5-Nalpha-putrescinylthymidine (Nalpha-PutT) as a step in the pathway leading to thymidine hypermodifications in the viral genome. As a final result of the pathway of hypermodification, Nalpha-PutT substitutes for about 50% of thymidines in the viral DNA. These modifications probably prevent degradation of viral genome by the host restriction-modification antiviral defense system. The polypeptide is Putrescinyltransferase (Delftia phage PhiW-14 (Deftia acidovorans bacteriophage phiW-14)).